A 372-amino-acid polypeptide reads, in one-letter code: Heat shock 70 kDa protein II (372 aa).

Belongs to the heat shock protein 70 family.

In Paracentrotus lividus (Common sea urchin), this protein is Heat shock 70 kDa protein II (HSP70II).